The chain runs to 330 residues: Peroxidase 55 (330 aa).

Residues 1–30 form the signal peptide; the sequence is MDIRSDDAKKPMMMWFLGMLLFSMVAESNA. Disulfide bonds link C41–C121, C74–C79, C127–C326, and C206–C238. The active-site Proton acceptor is the H72. Ca(2+) contacts are provided by D73, V76, G78, D80, and S82. P169 serves as a coordination point for substrate. H199 serves as a coordination point for heme b. T200 contributes to the Ca(2+) binding site. N215 carries an N-linked (GlcNAc...) asparagine glycan. The Ca(2+) site is built by D250, S253, and D258.

The protein belongs to the peroxidase family. Classical plant (class III) peroxidase subfamily. Requires heme b as cofactor. It depends on Ca(2+) as a cofactor. As to expression, slightly expressed in roots.

It localises to the secreted. It catalyses the reaction 2 a phenolic donor + H2O2 = 2 a phenolic radical donor + 2 H2O. In terms of biological role, removal of H(2)O(2), oxidation of toxic reductants, biosynthesis and degradation of lignin, suberization, auxin catabolism, response to environmental stresses such as wounding, pathogen attack and oxidative stress. These functions might be dependent on each isozyme/isoform in each plant tissue. This is Peroxidase 55 (PER55) from Arabidopsis thaliana (Mouse-ear cress).